Here is a 298-residue protein sequence, read N- to C-terminus: Glycine--tRNA ligase alpha subunit (298 aa).

Belongs to the class-II aminoacyl-tRNA synthetase family. As to quaternary structure, tetramer of two alpha and two beta subunits.

The protein localises to the cytoplasm. It carries out the reaction tRNA(Gly) + glycine + ATP = glycyl-tRNA(Gly) + AMP + diphosphate. The protein is Glycine--tRNA ligase alpha subunit (glyQ) of Helicobacter pylori (strain J99 / ATCC 700824) (Campylobacter pylori J99).